The primary structure comprises 362 residues: Cobalt-precorrin-5B C(1)-methyltransferase (362 aa).

This sequence belongs to the CbiD family.

It carries out the reaction Co-precorrin-5B + S-adenosyl-L-methionine = Co-precorrin-6A + S-adenosyl-L-homocysteine. The protein operates within cofactor biosynthesis; adenosylcobalamin biosynthesis; cob(II)yrinate a,c-diamide from sirohydrochlorin (anaerobic route): step 6/10. In terms of biological role, catalyzes the methylation of C-1 in cobalt-precorrin-5B to form cobalt-precorrin-6A. In Burkholderia thailandensis (strain ATCC 700388 / DSM 13276 / CCUG 48851 / CIP 106301 / E264), this protein is Cobalt-precorrin-5B C(1)-methyltransferase.